A 179-amino-acid chain; its full sequence is MTRLEQIYREKVVPVLQKEFNYTSSMQVPGIEKVSLNIGLGAASQNNKLMEEAIKELTAIAGQKAVVTRAKKSIASFKLREGMPIGCRVTLRKERMWDFLDKLMNFALPRVRDFRGIPDRGFDGRGNFTLGIKEHTIFPELEVDRVDNPKGMNITIVTTAQTDKEGKLLLDQLGMPFKK.

It belongs to the universal ribosomal protein uL5 family. As to quaternary structure, part of the 50S ribosomal subunit; part of the 5S rRNA/L5/L18/L25 subcomplex. Contacts the 5S rRNA and the P site tRNA. Forms a bridge to the 30S subunit in the 70S ribosome.

This is one of the proteins that bind and probably mediate the attachment of the 5S RNA into the large ribosomal subunit, where it forms part of the central protuberance. In the 70S ribosome it contacts protein S13 of the 30S subunit (bridge B1b), connecting the 2 subunits; this bridge is implicated in subunit movement. Contacts the P site tRNA; the 5S rRNA and some of its associated proteins might help stabilize positioning of ribosome-bound tRNAs. This Nitratidesulfovibrio vulgaris (strain DSM 19637 / Miyazaki F) (Desulfovibrio vulgaris) protein is Large ribosomal subunit protein uL5.